The sequence spans 77 residues: Translation initiation factor IF-1, chloroplastic (77 aa).

The S1-like domain occupies 1–71 (MKEQKWIHEG…TRGRIIYRLR (71 aa)).

Belongs to the IF-1 family. Component of the 30S ribosomal translation pre-initiation complex which assembles on the 30S ribosome in the order IF-2 and IF-3, IF-1 and N-formylmethionyl-tRNA(fMet); mRNA recruitment can occur at any time during PIC assembly.

The protein localises to the plastid. The protein resides in the chloroplast. In terms of biological role, one of the essential components for the initiation of protein synthesis. Stabilizes the binding of IF-2 and IF-3 on the 30S subunit to which N-formylmethionyl-tRNA(fMet) subsequently binds. Helps modulate mRNA selection, yielding the 30S pre-initiation complex (PIC). Upon addition of the 50S ribosomal subunit IF-1, IF-2 and IF-3 are released leaving the mature 70S translation initiation complex. This chain is Translation initiation factor IF-1, chloroplastic, found in Daucus carota (Wild carrot).